The primary structure comprises 166 residues: MNEWMKKGPLEWQDYTYKAVSVTASDKEYKGWVLTTDPVSANIVLVNFLEDGSMSVTGIMGHAVQTVEIVNEGDHSVREKLMHLFMSGDCKAYSPEDLEKRKNSLKKWLEKNHIPITEQRDSRKTLCVAGVLTIDPPYGPENCNSSNEIILSRVQDLIQGHLEASQ.

One can recognise a Sm domain in the interval 4–73 (WMKKGPLEWQ…VQTVEIVNEG (70 aa)). The AD domain maps to 68-166 (EIVNEGDHSV…LIQGHLEASQ (99 aa)). Residues S94 and S165 each carry the phosphoserine modification.

As to quaternary structure, part of the core SMN complex that contains SMN1, GEMIN2/SIP1, DDX20/GEMIN3, GEMIN4, GEMIN5, GEMIN6, GEMIN7, GEMIN8 and STRAP/UNRIP. Part of the SMN-Sm complex that contains SMN1, GEMIN2/SIP1, DDX20/GEMIN3, GEMIN4, GEMIN5, GEMIN6, GEMIN7, GEMIN8, STRAP/UNRIP and the Sm proteins SNRPB, SNRPD1, SNRPD2, SNRPD3, SNRPE, SNRPF and SNRPG. Interacts with GEMIN7; the interaction is direct. Interacts with GEMIN8; the interaction is direct. Interacts with SNRPB, SNRPD2, SNRPD3 and SNRPE; the interaction is direct.

Its subcellular location is the nucleus. It localises to the nucleoplasm. The protein localises to the gem. The protein resides in the cytoplasm. Functionally, the SMN complex catalyzes the assembly of small nuclear ribonucleoproteins (snRNPs), the building blocks of the spliceosome, and thereby plays an important role in the splicing of cellular pre-mRNAs. Most spliceosomal snRNPs contain a common set of Sm proteins SNRPB, SNRPD1, SNRPD2, SNRPD3, SNRPE, SNRPF and SNRPG that assemble in a heptameric protein ring on the Sm site of the small nuclear RNA to form the core snRNP (Sm core). In the cytosol, the Sm proteins SNRPD1, SNRPD2, SNRPE, SNRPF and SNRPG are trapped in an inactive 6S pICln-Sm complex by the chaperone CLNS1A that controls the assembly of the core snRNP. To assemble core snRNPs, the SMN complex accepts the trapped 5Sm proteins from CLNS1A forming an intermediate. Binding of snRNA inside 5Sm triggers eviction of the SMN complex, thereby allowing binding of SNRPD3 and SNRPB to complete assembly of the core snRNP. This Bos taurus (Bovine) protein is Gem-associated protein 6 (GEMIN6).